A 476-amino-acid chain; its full sequence is Dihydrolipoyl dehydrogenase (476 aa).

FAD is bound by residues 36-45, Lys54, and Ala117; that span reads EHQERLGGVC. A disulfide bond links Cys45 and Cys50. NAD(+) is bound by residues 182–186, Asp205, Val238, and 271–274; these read GGGII and AIGR. The FAD site is built by Asp314 and Ala322. Catalysis depends on His446, which acts as the Proton acceptor.

Belongs to the class-I pyridine nucleotide-disulfide oxidoreductase family. In terms of assembly, homodimer. FAD is required as a cofactor.

The protein localises to the cytoplasm. It carries out the reaction N(6)-[(R)-dihydrolipoyl]-L-lysyl-[protein] + NAD(+) = N(6)-[(R)-lipoyl]-L-lysyl-[protein] + NADH + H(+). Functionally, lipoamide dehydrogenase is a component of the alpha-ketoacid dehydrogenase complexes. This is Dihydrolipoyl dehydrogenase (lpdA) from Buchnera aphidicola subsp. Schizaphis graminum (strain Sg).